The sequence spans 84 residues: CDC42 small effector protein 2-A (84 aa).

Residues Cys10 and Cys11 are each lipidated (S-palmitoyl cysteine). The CRIB domain occupies 29-42; the sequence is IGEPTNFVHTAHVG.

Belongs to the CDC42SE/SPEC family.

It localises to the cytoplasm. Its subcellular location is the cytoskeleton. It is found in the cell membrane. Probably involved in the organization of the actin cytoskeleton by acting downstream of CDC42, inducing actin filament assembly. This Xenopus tropicalis (Western clawed frog) protein is CDC42 small effector protein 2-A (cdc42se2-A).